Consider the following 289-residue polypeptide: Phospholipase A1 (289 aa).

The N-terminal stretch at 1 to 20 (MRAILRGLLPATLLPLAAYA) is a signal peptide. Topologically, residues 21-52 (QEATIKEVHDAPAVRGSIIANMLQEHDNPFTL) are periplasmic. Residues 53 to 65 (YPYDTNYLIYTNT) form a beta stranded membrane-spanning segment. Topologically, residues 66–84 (SDLNKEAISTYNWSENARK) are extracellular. Residues 85–99 (DEVKFQLSLAFPLWR) form a beta stranded membrane-spanning segment. Topologically, residues 100–105 (GILGPN) are periplasmic. Residues 106–118 (SVLGASYTQKSWW) traverse the membrane as a beta stranded segment. At 119 to 128 (QLSNSKESSP) the chain is on the extracellular side. Ser-126 serves as a coordination point for Ca(2+). A beta stranded membrane pass occupies residues 129–148 (FRETNYEPQLFLGFATDYRF). Topologically, residues 149-150 (AG) are periplasmic. Residues 151–164 (WTLRDVEMGYNHDS) traverse the membrane as a beta stranded segment. Catalysis depends on His-162, which acts as the Proton acceptor. Ser-164 (nucleophile) is an active-site residue. At 165 to 173 (NGRSDPTSR) the chain is on the extracellular side. The Ca(2+) site is built by Arg-167 and Ser-172. A beta stranded membrane pass occupies residues 174–186 (SWNRLYTRLMAEN). Topologically, residues 187-188 (GN) are periplasmic. A beta stranded membrane pass occupies residues 189-198 (WLVEVKPWYV). Topologically, residues 199 to 216 (IGSTDDNPDITKYMGYYQ) are extracellular. Asp-204 provides a ligand contact to Ca(2+). Residues 217 to 223 (LKIGYHL) form a beta stranded membrane-spanning segment. At 224-225 (GE) the chain is on the periplasmic side. A beta stranded membrane pass occupies residues 226-234 (AVLSAKGQY). The Extracellular segment spans residues 235–241 (NWNTGYG). The chain crosses the membrane as a beta stranded span at residues 242–250 (GAEVGLSYP). The Periplasmic portion of the chain corresponds to 251–255 (VTKHV). Residues 256–265 (RLYTQVYSGY) form a beta stranded membrane-spanning segment. Over 266–274 (GESLIDYNF) the chain is Extracellular. The beta stranded transmembrane segment at 275–286 (NQTRVGVGVMLN) threads the bilayer. The Periplasmic portion of the chain corresponds to 287 to 289 (DIF).

Belongs to the phospholipase A1 family. As to quaternary structure, homodimer; dimerization is reversible, and the dimeric form is the active one. Ca(2+) serves as cofactor.

The protein resides in the cell outer membrane. The enzyme catalyses a 1,2-diacyl-sn-glycero-3-phosphocholine + H2O = a 2-acyl-sn-glycero-3-phosphocholine + a fatty acid + H(+). The catalysed reaction is a 1,2-diacyl-sn-glycero-3-phosphocholine + H2O = a 1-acyl-sn-glycero-3-phosphocholine + a fatty acid + H(+). In terms of biological role, hydrolysis of phosphatidylcholine with phospholipase A2 (EC 3.1.1.4) and phospholipase A1 (EC 3.1.1.32) activities. This Salmonella typhi protein is Phospholipase A1 (pldA).